Here is a 294-residue protein sequence, read N- to C-terminus: Elongation factor Ts (294 aa).

The involved in Mg(2+) ion dislocation from EF-Tu stretch occupies residues 79–82 (TDFV).

Belongs to the EF-Ts family.

The protein resides in the cytoplasm. In terms of biological role, associates with the EF-Tu.GDP complex and induces the exchange of GDP to GTP. It remains bound to the aminoacyl-tRNA.EF-Tu.GTP complex up to the GTP hydrolysis stage on the ribosome. The protein is Elongation factor Ts of Shouchella clausii (strain KSM-K16) (Alkalihalobacillus clausii).